A 246-amino-acid polypeptide reads, in one-letter code: Probable septum site-determining protein MinC (246 aa).

Residues 116–140 (AAVSPPPPPPARAEPAPPAARPAPG) are disordered. The span at 119–136 (SPPPPPPARAEPAPPAAR) shows a compositional bias: pro residues.

Belongs to the MinC family. As to quaternary structure, interacts with MinD and FtsZ.

Functionally, cell division inhibitor that blocks the formation of polar Z ring septums. Rapidly oscillates between the poles of the cell to destabilize FtsZ filaments that have formed before they mature into polar Z rings. Prevents FtsZ polymerization. This is Probable septum site-determining protein MinC from Xanthomonas oryzae pv. oryzae (strain MAFF 311018).